Here is a 440-residue protein sequence, read N- to C-terminus: Deoxyguanosinetriphosphate triphosphohydrolase-like protein (440 aa).

Residues 62 to 255 form the HD domain; that stretch reads RLTHSLEAAQ…MELADDIAYG (194 aa).

This sequence belongs to the dGTPase family. Type 2 subfamily.

In Vibrio parahaemolyticus serotype O3:K6 (strain RIMD 2210633), this protein is Deoxyguanosinetriphosphate triphosphohydrolase-like protein.